The primary structure comprises 322 residues: Ribonuclease Z (322 aa).

Residues histidine 62, histidine 64, aspartate 66, histidine 67, histidine 139, aspartate 210, and histidine 268 each coordinate Zn(2+). Aspartate 66 functions as the Proton acceptor in the catalytic mechanism.

It belongs to the RNase Z family. As to quaternary structure, homodimer. It depends on Zn(2+) as a cofactor.

The catalysed reaction is Endonucleolytic cleavage of RNA, removing extra 3' nucleotides from tRNA precursor, generating 3' termini of tRNAs. A 3'-hydroxy group is left at the tRNA terminus and a 5'-phosphoryl group is left at the trailer molecule.. In terms of biological role, zinc phosphodiesterase, which displays some tRNA 3'-processing endonuclease activity. Probably involved in tRNA maturation, by removing a 3'-trailer from precursor tRNA. The chain is Ribonuclease Z from Nostoc sp. (strain PCC 7120 / SAG 25.82 / UTEX 2576).